The following is a 569-amino-acid chain: uncharacterized protein (569 aa).

The chain crosses the membrane as a helical span at residues 2-22; sequence VVIAALLGSLAVLAFLFYLWY.

The protein resides in the membrane. This is an uncharacterized protein from Mycoplasma pneumoniae (strain ATCC 29342 / M129 / Subtype 1) (Mycoplasmoides pneumoniae).